We begin with the raw amino-acid sequence, 312 residues long: Aspartate carbamoyltransferase catalytic subunit (312 aa).

R55 and T56 together coordinate carbamoyl phosphate. Residue K83 coordinates L-aspartate. Carbamoyl phosphate-binding residues include R105, H138, and Q141. L-aspartate contacts are provided by R171 and R225. 2 residues coordinate carbamoyl phosphate: G266 and P267.

This sequence belongs to the aspartate/ornithine carbamoyltransferase superfamily. ATCase family. In terms of assembly, heterododecamer (2C3:3R2) of six catalytic PyrB chains organized as two trimers (C3), and six regulatory PyrI chains organized as three dimers (R2).

The enzyme catalyses carbamoyl phosphate + L-aspartate = N-carbamoyl-L-aspartate + phosphate + H(+). The protein operates within pyrimidine metabolism; UMP biosynthesis via de novo pathway; (S)-dihydroorotate from bicarbonate: step 2/3. Catalyzes the condensation of carbamoyl phosphate and aspartate to form carbamoyl aspartate and inorganic phosphate, the committed step in the de novo pyrimidine nucleotide biosynthesis pathway. The chain is Aspartate carbamoyltransferase catalytic subunit from Corynebacterium glutamicum (strain ATCC 13032 / DSM 20300 / JCM 1318 / BCRC 11384 / CCUG 27702 / LMG 3730 / NBRC 12168 / NCIMB 10025 / NRRL B-2784 / 534).